Here is a 778-residue protein sequence, read N- to C-terminus: Lon protease (778 aa).

The Lon N-terminal domain occupies 4–187; the sequence is LPVLPLTDAV…LLVGWVRAHL (184 aa). An ATP-binding site is contributed by 346-353; that stretch reads GPPGVGKT. Residues 581–762 form the Lon proteolytic domain; that stretch reads TAVPGVATGL…ADVLALALRP (182 aa). Active-site residues include Ser-668 and Lys-711.

This sequence belongs to the peptidase S16 family. In terms of assembly, homohexamer. Organized in a ring with a central cavity.

The protein localises to the cytoplasm. It carries out the reaction Hydrolysis of proteins in presence of ATP.. In terms of biological role, ATP-dependent serine protease that mediates the selective degradation of mutant and abnormal proteins as well as certain short-lived regulatory proteins. Required for cellular homeostasis and for survival from DNA damage and developmental changes induced by stress. Degrades polypeptides processively to yield small peptide fragments that are 5 to 10 amino acids long. Binds to DNA in a double-stranded, site-specific manner. The polypeptide is Lon protease (Salinispora arenicola (strain CNS-205)).